The primary structure comprises 123 residues: Small ribosomal subunit protein uS12 (123 aa).

Asp-89 is subject to 3-methylthioaspartic acid.

The protein belongs to the universal ribosomal protein uS12 family. In terms of assembly, part of the 30S ribosomal subunit. Contacts proteins S8 and S17. May interact with IF1 in the 30S initiation complex.

Its function is as follows. With S4 and S5 plays an important role in translational accuracy. Functionally, interacts with and stabilizes bases of the 16S rRNA that are involved in tRNA selection in the A site and with the mRNA backbone. Located at the interface of the 30S and 50S subunits, it traverses the body of the 30S subunit contacting proteins on the other side and probably holding the rRNA structure together. The combined cluster of proteins S8, S12 and S17 appears to hold together the shoulder and platform of the 30S subunit. In Citrifermentans bemidjiense (strain ATCC BAA-1014 / DSM 16622 / JCM 12645 / Bem) (Geobacter bemidjiensis), this protein is Small ribosomal subunit protein uS12.